Reading from the N-terminus, the 260-residue chain is Exosome complex component Rrp4 (260 aa).

In terms of domain architecture, S1 motif spans Asn59–Arg128. The KH domain occupies Lys136–Leu194.

This sequence belongs to the RRP4 family. Component of the archaeal exosome complex. Forms a trimer of Rrp4 and/or Csl4 subunits. The trimer associates with a hexameric ring-like arrangement composed of 3 Rrp41-Rrp42 heterodimers.

Its subcellular location is the cytoplasm. Non-catalytic component of the exosome, which is a complex involved in RNA degradation. Increases the RNA binding and the efficiency of RNA degradation. Confers strong poly(A) specificity to the exosome. The protein is Exosome complex component Rrp4 of Methanosarcina acetivorans (strain ATCC 35395 / DSM 2834 / JCM 12185 / C2A).